A 513-amino-acid polypeptide reads, in one-letter code: Histone acetyltransferase KAT5 (513 aa).

The region spanning 8–65 is the Tudor-knot domain; sequence IEGCRLPVLRRNQDNEDEWPLAEILSVKDISGRKLFYVHYIDFNKRLDEWVTHERLDL. Lys52 carries the post-translational modification N6-acetyllysine. The tract at residues 69–106 is disordered; sequence QFPKKEAKTPTKNGLPGSRPGSPEREVPASAQASGKTL. Position 86 is a phosphoserine (Ser86). Ser90 is modified (phosphoserine; by CDK1 and CDK9). N6-acetyllysine; by autocatalysis occurs at positions 104 and 120. The segment at 122-217 is disordered; sequence REAIPGGEPD…SAPRMTGSLV (96 aa). Residues 133-144 show a composition bias toward polar residues; it reads PLSSSSCLQPNH. N6-acetyllysine; by autocatalysis is present on residues Lys148, Lys150, Lys187, and Lys189. Phosphoserine is present on Ser199. In terms of domain architecture, MYST-type HAT spans 227–504; the sequence is TRMKNIECIE…IDSKCLHFTP (278 aa). The C2HC MYST-type zinc finger occupies 260–285; sequence LYLCEFCLKYGRSLKCLQRHLTKCDL. An N6-acetyllysine; by autocatalysis modification is found at Lys327. An interaction with ATF2 region spans residues 368 to 513; sequence ACILTLPPYQ…PKDWSKRGKW (146 aa). Residues 370-372 and 377-383 contribute to the acetyl-CoA site; these read ILT and QRRGYGK. Catalysis depends on Glu403, which acts as the Proton donor/acceptor. Residues Ser407 and Ser416 each contribute to the acetyl-CoA site. Lys430 participates in a covalent cross-link: Glycyl lysine isopeptide (Lys-Gly) (interchain with G-Cter in SUMO1); alternate. Lys430 is covalently cross-linked (Glycyl lysine isopeptide (Lys-Gly) (interchain with G-Cter in SUMO2); alternate). Residue Lys451 forms a Glycyl lysine isopeptide (Lys-Gly) (interchain with G-Cter in SUMO1) linkage.

This sequence belongs to the MYST (SAS/MOZ) family. As to quaternary structure, component of the NuA4 histone acetyltransferase complex which contains the catalytic subunit KAT5/TIP60 and the subunits EP400, TRRAP/PAF400, BRD8/SMAP, EPC1, DMAP1/DNMAP1, RUVBL1/TIP49, RUVBL2, ING3, actin, ACTL6A/BAF53A, MORF4L1/MRG15, MORF4L2/MRGX, MRGBP, YEATS4/GAS41, VPS72/YL1 and MEAF6. KAT5/TIP60, EPC1, and ING3 together constitute a minimal HAT complex termed Piccolo NuA4. The NuA4 complex interacts with MYC. Interacts with ATM. Interacts with JADE1. Interacts with PLA2G4A/CPLA2, EDNRA and HDAC7. Interacts with the cytoplasmic tail of APP and APBB1/FE65. Interacts with TRIM24 and TRIM68. Forms a complex with SENP6 and UBE2I in response to UV irradiation. Identified in a complex with HINT1. Interacts with ATF2 and CUL3. Interacts with NR1D2 (via N-terminus). Component of a SWR1-like complex. Interacts with FOXP3. Interacts with ZBTB49. Interacts with SRF. Interacts with ATF3; promoting autoacetylation and deubiquitination by USP7. Interacts with EP300/p300; interaction promotes KAT5 autoacetylation. Interacts with PRKDC; interaction is impaired following KAT5 sumoylation. Interacts with GPR50. Interacts with NME3; this interaction enables recruitment of NME3 at DNA damage sites where it plays a role in the repair of DNA. Phosphorylated on Ser-86 and Ser-90; enhanced during G2/M phase. The phosphorylated form has a higher activity. Phosphorylation at Ser-90 by CDK1 or CDK9 is a prerequisite for phosphorylation at Ser-86 by GSK3. Phosphorylation at Ser-86 by GSK3 (GSK3A or GSK3B) activates acetyltransferase and acyltransferase activity. Phosphorylation at Ser-90 by CDK9 promotes KAT5 recruitment to chromatin. Phosphorylation by VRK1 following DNA damage promotes KAT5 association with chromatin and histone acetyltransferase activity. In terms of processing, autoacetylated. Autoacetylation is required for histone acetyltransferase activity. Autoacetylation at Lys-327 is facilitated by interaction with EP300/p300: it prevents ubiquitination and subsequent degradation by the proteasome and promotes acetylation of target proteins. Deacetylated by HDAC3 and SIRT1. Deacetylation by HDAC3 promotes its ubiquitination and cytoplasmic localization. Post-translationally, sumoylated by UBE2I at Lys-430 and Lys-451, leading to increase of its histone acetyltransferase activity in UV-induced DNA damage response, as well as its translocation to nuclear bodies. Sumoylation with SUMO2 by PIAS4 at Lys-430 promotes repair of DNA double-strand breaks (DSBs) via homologous recombination (HR). Sumoylation by PIAS4 impairs interaction with PRKDC, inhibiting non-homologous end joining (NHEJ)-mediated repair of DSBs, thereby facilitating HR. Desumoylated by SENP3. Ubiquitinated by MDM2, leading to its proteasome-dependent degradation. Ubiquitination is prevented by autoacetylation at Lys-327. Ubiquitinated following deacetylation by HDAC3, leading to cytoplasmic localization. Deubiquitinated by USP7 following interaction with ATF3, promoting its stabilization. As to expression, expressed in testis, heart, brain, kidney and liver. Weakly expressed in lung.

The protein localises to the nucleus. The protein resides in the chromosome. It is found in the cytoplasm. Its subcellular location is the centromere. It localises to the kinetochore. The protein localises to the cytoskeleton. The protein resides in the spindle pole. It is found in the nucleolus. Its subcellular location is the perinuclear region. The catalysed reaction is L-lysyl-[histone] + acetyl-CoA = N(6)-acetyl-L-lysyl-[histone] + CoA + H(+). The enzyme catalyses L-lysyl-[protein] + acetyl-CoA = N(6)-acetyl-L-lysyl-[protein] + CoA + H(+). It catalyses the reaction (2E)-butenoyl-CoA + L-lysyl-[protein] = N(6)-(2E)-butenoyl-L-lysyl-[protein] + CoA + H(+). It carries out the reaction 2-hydroxyisobutanoyl-CoA + L-lysyl-[protein] = N(6)-(2-hydroxyisobutanoyl)-L-lysyl-[protein] + CoA + H(+). The catalysed reaction is (S)-lactoyl-CoA + L-lysyl-[protein] = N(6)-[(S)-lactoyl]-L-lysyl-[protein] + CoA + H(+). With respect to regulation, acyltransferase and acetyltransferase activities are activated by phosphorylation and autoacetylation. Autoacetylation activates the histone acetyltransferase activity. Its function is as follows. Catalytic subunit of the NuA4 histone acetyltransferase complex, a multiprotein complex involved in transcriptional activation of select genes principally by acetylation of nucleosomal histones H2A and H4. Histone acetylation alters nucleosome-DNA interactions and promotes interaction of the modified histones with other proteins which positively regulate transcription. The NuA4 histone acetyltransferase complex is required for the activation of transcriptional programs associated with proto-oncogene mediated growth induction, tumor suppressor mediated growth arrest and replicative senescence, apoptosis, and DNA repair. The NuA4 complex plays a direct role in repair of DNA double-strand breaks (DSBs) by promoting homologous recombination (HR): the complex inhibits TP53BP1 binding to chromatin via MBTD1, which recognizes and binds histone H4 trimethylated at 'Lys-20' (H4K20me), and KAT5 that catalyzes acetylation of 'Lys-15' of histone H2A (H2AK15ac), thereby blocking the ubiquitination mark required for TP53BP1 localization at DNA breaks. Also involved in DSB repair by mediating acetylation of 'Lys-5' of histone H2AX (H2AXK5ac), promoting NBN/NBS1 assembly at the sites of DNA damage. The NuA4 complex plays a key role in hematopoietic stem cell maintenance and is required to maintain acetylated H2A.Z/H2AZ1 at MYC target genes. The NuA4 complex is also required for spermatid development by promoting acetylation of histones: histone hyperacetylation is required for histone replacement during the transition from round to elongating spermatids. Component of a SWR1-like complex that specifically mediates the removal of histone H2A.Z/H2AZ1 from the nucleosome. Also acetylates non-histone proteins, such as BMAL1, ATM, AURKB, CHKA, CGAS, ERCC4/XPF, LPIN1, TP53/p53, NDC80/HEC1, NR1D2, RAN, SOX4, FOXP3, SQSTM1, ULK1 and RUBCNL/Pacer. Directly acetylates and activates ATM. Promotes nucleotide excision repair (NER) by mediating acetylation of ERCC4/XPF, thereby promoting formation of the ERCC4-ERCC1 complex. Relieves NR1D2-mediated inhibition of APOC3 expression by acetylating NR1D2. Acts as a regulator of regulatory T-cells (Treg) by catalyzing FOXP3 acetylation, thereby promoting FOXP3 transcriptional repressor activity. Involved in skeletal myoblast differentiation by mediating acetylation of SOX4. Catalyzes acetylation of APBB1/FE65, increasing its transcription activator activity. Promotes transcription elongation during the activation phase of the circadian cycle by catalyzing acetylation of BMAL1, promoting elongation of circadian transcripts. Together with GSK3 (GSK3A or GSK3B), acts as a regulator of autophagy: phosphorylated at Ser-86 by GSK3 under starvation conditions, leading to activate acetyltransferase activity and promote acetylation of key autophagy regulators, such as ULK1 and RUBCNL/Pacer. Acts as a regulator of the cGAS-STING innate antiviral response by catalyzing acetylation the N-terminus of CGAS, thereby promoting CGAS DNA-binding and activation. Also regulates lipid metabolism by mediating acetylation of CHKA or LPIN1. Promotes lipolysis of lipid droplets following glucose deprivation by mediating acetylation of isoform 1 of CHKA, thereby promoting monomerization of CHKA and its conversion into a tyrosine-protein kinase. Acts as a regulator of fatty-acid-induced triacylglycerol synthesis by catalyzing acetylation of LPIN1, thereby promoting the synthesis of diacylglycerol. In addition to protein acetyltransferase, can use different acyl-CoA substrates, such as (2E)-butenoyl-CoA (crotonyl-CoA), S-lactoyl-CoA (lactyl-CoA) and 2-hydroxyisobutanoyl-CoA (2-hydroxyisobutyryl-CoA), and is able to mediate protein crotonylation, lactylation and 2-hydroxyisobutyrylation, respectively. Acts as a key regulator of chromosome segregation and kinetochore-microtubule attachment during mitosis by mediating acetylation or crotonylation of target proteins. Catalyzes acetylation of AURKB at kinetochores, increasing AURKB activity and promoting accurate chromosome segregation in mitosis. Acetylates RAN during mitosis, promoting microtubule assembly at mitotic chromosomes. Acetylates NDC80/HEC1 during mitosis, promoting robust kinetochore-microtubule attachment. Catalyzes crotonylation of MAPRE1/EB1, thereby ensuring accurate spindle positioning in mitosis. Catalyzes lactylation of NBN/NBS1 in response to DNA damage, thereby promoting DNA double-strand breaks (DSBs) via homologous recombination (HR). In Mus musculus (Mouse), this protein is Histone acetyltransferase KAT5.